A 375-amino-acid chain; its full sequence is Killer cell immunoglobulin-like receptor 2DL5B (375 aa).

The first 21 residues, 1-21 (MSLMVVSMACVGFFLLQGAWT), serve as a signal peptide directing secretion. Over 22–238 (HEGGQDKPLL…PSSKTGIRRH (217 aa)) the chain is Extracellular. 2 consecutive Ig-like C2-type domains span residues 42-102 (GGHV…HPRS) and 137-200 (GENV…LHDS). Cystine bridges form between Cys49–Cys95 and Cys144–Cys193. Residues 213 to 233 (VSVTGNSSSSSSSPTEPSSKT) form a disordered region. N-linked (GlcNAc...) asparagine glycosylation is present at Asn218. The span at 219-231 (SSSSSSSPTEPSS) shows a compositional bias: low complexity. The chain crosses the membrane as a helical span at residues 239 to 259 (LHILIGTSVAIILFIILFFFL). Residues 260–375 (LHCCCSNKKN…ASSHVPAAGI (116 aa)) are Cytoplasmic-facing. The interval 334-375 (AKPRSLSPAHKHHSQALRGSSRETTALSQNRVASSHVPAAGI) is disordered. The span at 355-366 (RETTALSQNRVA) shows a compositional bias: polar residues.

Belongs to the immunoglobulin superfamily.

It is found in the cell membrane. In terms of biological role, receptor on natural killer (NK) cells for HLA-C alleles. Inhibits the activity of NK cells thus preventing cell lysis. This Homo sapiens (Human) protein is Killer cell immunoglobulin-like receptor 2DL5B (KIR2DL5B).